The primary structure comprises 363 residues: Aminomethyltransferase (363 aa).

The protein belongs to the GcvT family. The glycine cleavage system is composed of four proteins: P, T, L and H.

It carries out the reaction N(6)-[(R)-S(8)-aminomethyldihydrolipoyl]-L-lysyl-[protein] + (6S)-5,6,7,8-tetrahydrofolate = N(6)-[(R)-dihydrolipoyl]-L-lysyl-[protein] + (6R)-5,10-methylene-5,6,7,8-tetrahydrofolate + NH4(+). Functionally, the glycine cleavage system catalyzes the degradation of glycine. This chain is Aminomethyltransferase, found in Teredinibacter turnerae (strain ATCC 39867 / T7901).